The primary structure comprises 337 residues: PHD finger protein 11 (337 aa).

The C2HC pre-PHD-type zinc-finger motif lies at Lys-25–Leu-61. The PHD-type zinc finger occupies Leu-91–Ser-143. Disordered stretches follow at residues Glu-145–Thr-196 and Gly-301–Leu-337. A compositionally biased stretch (basic and acidic residues) spans His-187–Thr-196. Composition is skewed to polar residues over residues Gly-301–Ser-312 and Ser-323–Leu-337.

As to quaternary structure, interacts with BRCA1 and RELA.

Its subcellular location is the nucleus. In terms of biological role, positive regulator of Th1-type cytokine gene expression. The sequence is that of PHD finger protein 11 (Phf11) from Mus musculus (Mouse).